The chain runs to 401 residues: Pyruvyl transferase 1 (401 aa).

The N-terminal stretch at Met1 to Arg30 is a signal peptide. The tract at residues Asn38 to Asn64 is disordered. Positions Pro39–Ser50 are enriched in low complexity.

Belongs to the polysaccharide pyruvyl transferase family.

Its function is as follows. Involved in cell wall biogenesis. Has a role in the addition of Gal-beta1,3 moieties to galactomannans and their subsequent pyruvylation. This Schizosaccharomyces pombe (strain 972 / ATCC 24843) (Fission yeast) protein is Pyruvyl transferase 1 (pvg1).